The sequence spans 521 residues: UPF0053 protein BU323 (521 aa).

Transmembrane regions (helical) follow at residues Leu-13 to Ile-33, Ile-49 to Val-69, Phe-80 to Lys-100, Phe-125 to Ile-145, Met-150 to Leu-170, Val-185 to Leu-205, and Phe-207 to Phe-227. 2 CBS domains span residues Met-311–Ala-370 and Ser-374–Glu-434.

This sequence belongs to the UPF0053 family.

Its subcellular location is the cell membrane. This Buchnera aphidicola subsp. Acyrthosiphon pisum (strain APS) (Acyrthosiphon pisum symbiotic bacterium) protein is UPF0053 protein BU323.